A 155-amino-acid chain; its full sequence is Microsomal glutathione S-transferase 1 (155 aa).

The Lumenal portion of the chain corresponds to D3–K9. A helical transmembrane segment spans residues N10–A33. Over T34–Y62 the chain is Cytoplasmic. R38 serves as a coordination point for glutathione. N6-acetyllysine is present on residues K42, K55, and K60. A helical transmembrane segment spans residues L63–S96. Glutathione contacts are provided by R73, R74, H76, and E81. Over G97 to D99 the chain is Lumenal. The chain crosses the membrane as a helical span at residues L100–T123. Glutathione is bound at residue Y121. Topologically, residues P124–P128 are cytoplasmic. A helical transmembrane segment spans residues N129–L148. The Lumenal segment spans residues L149–L155.

Belongs to the MAPEG family. In terms of assembly, homotrimer; The trimer binds only one molecule of glutathione.

The protein localises to the endoplasmic reticulum membrane. Its subcellular location is the mitochondrion outer membrane. It carries out the reaction RX + glutathione = an S-substituted glutathione + a halide anion + H(+). Its function is as follows. Conjugation of reduced glutathione to a wide number of exogenous and endogenous hydrophobic electrophiles. The polypeptide is Microsomal glutathione S-transferase 1 (MGST1) (Sus scrofa (Pig)).